The primary structure comprises 207 residues: LexA repressor (207 aa).

The segment at residues 28 to 47 (VREIARRFRITPRGAQLHLV) is a DNA-binding region (H-T-H motif). Residues serine 119 and lysine 156 each act as for autocatalytic cleavage activity in the active site.

It belongs to the peptidase S24 family. As to quaternary structure, homodimer.

The enzyme catalyses Hydrolysis of Ala-|-Gly bond in repressor LexA.. Its function is as follows. Represses a number of genes involved in the response to DNA damage (SOS response), including recA and lexA. In the presence of single-stranded DNA, RecA interacts with LexA causing an autocatalytic cleavage which disrupts the DNA-binding part of LexA, leading to derepression of the SOS regulon and eventually DNA repair. The protein is LexA repressor of Thermotoga neapolitana (strain ATCC 49049 / DSM 4359 / NBRC 107923 / NS-E).